Consider the following 309-residue polypeptide: Tagatose-6-phosphate kinase (309 aa).

It belongs to the carbohydrate kinase PfkB family. LacC subfamily.

It carries out the reaction D-tagatofuranose 6-phosphate + ATP = D-tagatofuranose 1,6-bisphosphate + ADP + H(+). It functions in the pathway carbohydrate metabolism; D-tagatose 6-phosphate degradation; D-glyceraldehyde 3-phosphate and glycerone phosphate from D-tagatose 6-phosphate: step 1/2. In Streptococcus pyogenes serotype M18 (strain MGAS8232), this protein is Tagatose-6-phosphate kinase.